Reading from the N-terminus, the 135-residue chain is MSQEFVGRWKLIHSENFEEYMKEVGVGLITRKAAANLKPTLEIKVEGDLWYSNQYSTFKNTTLSFKLGQEFDETTPDGRTVKSVVNFENGKFIHIQKKIKDSDKESIITRWLEGDKLITTLESGSVVSRREYVRE.

Residues Arg-110 and 130–132 (REY) each bind a fatty acid.

This sequence belongs to the calycin superfamily. Fatty-acid binding protein (FABP) family.

This chain is Fatty acid-binding protein homolog 6 (lbp-6), found in Caenorhabditis elegans.